The following is a 511-amino-acid chain: Zinc finger CCCH-type with G patch domain-containing protein (511 aa).

Met1 carries the N-acetylmethionine modification. Ser70 is modified (phosphoserine). The interval 92-129 is disordered; that stretch reads PGAPCNDSETAPGSEVQPGSTSSALEEEEEDPDLEELS. A compositionally biased stretch (polar residues) spans 98–115; it reads DSETAPGSEVQPGSTSSA. A compositionally biased stretch (acidic residues) spans 116 to 127; it reads LEEEEEDPDLEE. Residues 174-200 form a C3H1-type zinc finger; the sequence is KSLKPCPFFLEGKCRFKENCRFSHGQV. A disordered region spans residues 266 to 291; sequence PPLRTEATESSDSDTGDASDSSYARV. At Ser276 the chain carries Phosphoserine. Phosphothreonine is present on Thr280. Residues 313–359 form the G-patch domain; that stretch reads TRGIGSKLLVKMGYEFGKGLGRHAEGRVEPIHAVVLPRGKSLDQCAE. The residue at position 353 (Ser353) is a Phosphoserine. Disordered regions lie at residues 363-393 and 490-511; these read KKTK…PPRN and AQEA…MTEF. The segment covering 491–511 has biased composition (basic and acidic residues); sequence QEADLQRKQRKADTHRKMTEF.

Interacts with CHD4/Mi-2; the interaction is direct.

The protein localises to the nucleus. Functionally, transcription repressor that specifically binds the 5'-GGAG[GA]A[GA]A-3' consensus sequence. Represses transcription by recruiting the chromatin multiprotein complex NuRD to target promoters. Negatively regulates expression of EGFR, a gene involved in cell proliferation, survival and migration. Its ability to repress genes of the EGFR pathway suggest it may act as a tumor suppressor. This Mus musculus (Mouse) protein is Zinc finger CCCH-type with G patch domain-containing protein (Zgpat).